A 221-amino-acid polypeptide reads, in one-letter code: Arginine ABC transporter permease protein ArtQ (221 aa).

An ABC transmembrane type-1 domain is found at 13 to 206 (ALMTLGLAVC…AVTLISQVGI (194 aa)). 5 consecutive transmembrane segments (helical) span residues 17 to 37 (LGLA…FAVL), 49 to 69 (VFVA…VYFG), 82 to 102 (IEFG…AAYA), 121 to 141 (GAAL…PQVW), and 186 to 206 (TWYG…QVGI).

Belongs to the binding-protein-dependent transport system permease family. HisMQ subfamily. In terms of assembly, the complex is composed of two ATP-binding proteins (ArtP), two transmembrane proteins (ArtM and ArtQ) and a solute-binding protein (ArtI).

The protein localises to the cell inner membrane. Its function is as follows. Part of the ABC transporter complex ArtPIQM involved in arginine transport. Probably responsible for the translocation of the substrate across the membrane. This Haemophilus influenzae (strain ATCC 51907 / DSM 11121 / KW20 / Rd) protein is Arginine ABC transporter permease protein ArtQ (artQ).